A 562-amino-acid polypeptide reads, in one-letter code: NAD-dependent malic enzyme (562 aa).

The Proton donor role is filled by Tyr101. Residue Arg154 participates in NAD(+) binding. Catalysis depends on Lys172, which acts as the Proton acceptor. Glu243, Asp244, and Asp267 together coordinate a divalent metal cation. NAD(+) contacts are provided by Asp267 and Asn415.

The protein belongs to the malic enzymes family. In terms of assembly, homotetramer. Mg(2+) serves as cofactor. The cofactor is Mn(2+).

The enzyme catalyses (S)-malate + NAD(+) = pyruvate + CO2 + NADH. It carries out the reaction oxaloacetate + H(+) = pyruvate + CO2. In Shewanella denitrificans (strain OS217 / ATCC BAA-1090 / DSM 15013), this protein is NAD-dependent malic enzyme.